The following is a 79-amino-acid chain: Conotoxin ArMSGL-0124 (79 aa).

A signal peptide spans 1-20 (MSRLGIMVLTLLLLVYMATS). The propeptide occupies 21-44 (HQDAGEKQATQRDAINFRWKRSLT). 3 cysteine pairs are disulfide-bonded: Cys52–Cys64, Cys56–Cys73, and Cys63–Cys77. Leu78 carries the leucine amide modification.

This sequence belongs to the conotoxin O3 superfamily. In terms of tissue distribution, expressed by the venom duct.

It localises to the secreted. This Conus arenatus (Sand-dusted cone) protein is Conotoxin ArMSGL-0124.